The following is a 169-amino-acid chain: 3-hydroxyacyl-[acyl-carrier-protein] dehydratase FabZ (169 aa).

The active site involves H66.

The protein belongs to the thioester dehydratase family. FabZ subfamily.

It is found in the cytoplasm. It carries out the reaction a (3R)-hydroxyacyl-[ACP] = a (2E)-enoyl-[ACP] + H2O. In terms of biological role, involved in unsaturated fatty acids biosynthesis. Catalyzes the dehydration of short chain beta-hydroxyacyl-ACPs and long chain saturated and unsaturated beta-hydroxyacyl-ACPs. In Helicobacter hepaticus (strain ATCC 51449 / 3B1), this protein is 3-hydroxyacyl-[acyl-carrier-protein] dehydratase FabZ.